A 610-amino-acid chain; its full sequence is Elongation factor 4 (610 aa).

A tr-type G domain is found at glutamine 11–threonine 193. GTP-binding positions include aspartate 23 to threonine 28 and asparagine 140 to aspartate 143.

The protein belongs to the TRAFAC class translation factor GTPase superfamily. Classic translation factor GTPase family. LepA subfamily.

Its subcellular location is the cell membrane. The enzyme catalyses GTP + H2O = GDP + phosphate + H(+). In terms of biological role, required for accurate and efficient protein synthesis under certain stress conditions. May act as a fidelity factor of the translation reaction, by catalyzing a one-codon backward translocation of tRNAs on improperly translocated ribosomes. Back-translocation proceeds from a post-translocation (POST) complex to a pre-translocation (PRE) complex, thus giving elongation factor G a second chance to translocate the tRNAs correctly. Binds to ribosomes in a GTP-dependent manner. The sequence is that of Elongation factor 4 from Limosilactobacillus fermentum (strain NBRC 3956 / LMG 18251) (Lactobacillus fermentum).